The following is a 343-amino-acid chain: uncharacterized protein (343 aa).

It belongs to the IIV-6 219L family.

This is an uncharacterized protein from Invertebrate iridescent virus 6 (IIV-6).